The chain runs to 157 residues: NudC domain-containing protein 2 (157 aa).

The residue at position 2 (Ser2) is an N-acetylserine. The region spanning 14-104 (CGTPWGQWYQ…DAANCWTSLL (91 aa)) is the CS domain. Residues 134–157 (FDFSGAEISGNYTKGGPDFSNLEK) are disordered. Ser142 is modified (phosphoserine). Tyr145 is subject to Phosphotyrosine.

Interacts with LIS1.

Its subcellular location is the chromosome. The protein resides in the centromere. The protein localises to the kinetochore. It localises to the cytoplasm. It is found in the cytoskeleton. Its subcellular location is the microtubule organizing center. The protein resides in the centrosome. The protein localises to the spindle pole. Functionally, may regulate the LIS1/dynein pathway by stabilizing LIS1 with Hsp90 chaperone. The protein is NudC domain-containing protein 2 (Nudcd2) of Mus musculus (Mouse).